The chain runs to 381 residues: Alkanesulfonate monooxygenase (381 aa).

It belongs to the SsuD family. In terms of assembly, homotetramer.

It catalyses the reaction an alkanesulfonate + FMNH2 + O2 = an aldehyde + FMN + sulfite + H2O + 2 H(+). Catalyzes the desulfonation of aliphatic sulfonates. In Escherichia coli (strain SMS-3-5 / SECEC), this protein is Alkanesulfonate monooxygenase.